Here is a 736-residue protein sequence, read N- to C-terminus: Elongation factor 2 (736 aa).

A tr-type G domain is found at 18 to 261; that stretch reads EQIRNIGITA…MVVKHIPNPR (244 aa). Residues 27-34, 93-97, and 147-150 contribute to the GTP site; these read AHVDHGKT, DTPGH, and NKID. His602 carries the post-translational modification Diphthamide.

It belongs to the TRAFAC class translation factor GTPase superfamily. Classic translation factor GTPase family. EF-G/EF-2 subfamily.

It is found in the cytoplasm. Functionally, catalyzes the GTP-dependent ribosomal translocation step during translation elongation. During this step, the ribosome changes from the pre-translocational (PRE) to the post-translocational (POST) state as the newly formed A-site-bound peptidyl-tRNA and P-site-bound deacylated tRNA move to the P and E sites, respectively. Catalyzes the coordinated movement of the two tRNA molecules, the mRNA and conformational changes in the ribosome. The protein is Elongation factor 2 of Desulfurococcus amylolyticus (strain DSM 18924 / JCM 16383 / VKM B-2413 / 1221n) (Desulfurococcus kamchatkensis).